Reading from the N-terminus, the 686-residue chain is Potassium-transporting ATPase ATP-binding subunit 2 (686 aa).

4 helical membrane-spanning segments follow: residues 37 to 57, 64 to 84, 223 to 243, and 255 to 275; these read MFVV…PNLF, MILY…FANF, LLVS…PMAI, and VALT…AIGI. The active-site 4-aspartylphosphate intermediate is the D306. ATP-binding positions include D343, E347, 376-383, and K395; that span reads FTAQTRMS. Mg(2+) is bound by residues D518 and D522. Helical transmembrane passes span 588–608, 616–636, and 656–676; these read FAII…LNIM, AILS…PLAM, and VYGV…DLVI.

This sequence belongs to the cation transport ATPase (P-type) (TC 3.A.3) family. Type IA subfamily. As to quaternary structure, the system is composed of three essential subunits: KdpA, KdpB and KdpC.

The protein resides in the cell membrane. It carries out the reaction K(+)(out) + ATP + H2O = K(+)(in) + ADP + phosphate + H(+). Its function is as follows. Part of the high-affinity ATP-driven potassium transport (or Kdp) system, which catalyzes the hydrolysis of ATP coupled with the electrogenic transport of potassium into the cytoplasm. This subunit is responsible for energy coupling to the transport system and for the release of the potassium ions to the cytoplasm. The protein is Potassium-transporting ATPase ATP-binding subunit 2 of Listeria innocua serovar 6a (strain ATCC BAA-680 / CLIP 11262).